Here is a 358-residue protein sequence, read N- to C-terminus: Isopentenyl-diphosphate delta-isomerase (358 aa).

12 to 13 (RK) is a binding site for substrate. FMN contacts are provided by residues 69–71 (AMT), serine 99, and asparagine 128. Glutamine 158 is a binding site for substrate. Residue glutamate 159 participates in Mg(2+) binding. FMN-binding positions include lysine 190, threonine 220, 267–269 (GIR), and 288–289 (AG).

It belongs to the IPP isomerase type 2 family. In terms of assembly, homooctamer. Dimer of tetramers. FMN is required as a cofactor. The cofactor is NADPH. Requires Mg(2+) as cofactor.

It localises to the cytoplasm. It catalyses the reaction isopentenyl diphosphate = dimethylallyl diphosphate. In terms of biological role, involved in the biosynthesis of isoprenoids. Catalyzes the 1,3-allylic rearrangement of the homoallylic substrate isopentenyl (IPP) to its allylic isomer, dimethylallyl diphosphate (DMAPP). This is Isopentenyl-diphosphate delta-isomerase from Listeria innocua serovar 6a (strain ATCC BAA-680 / CLIP 11262).